A 211-amino-acid chain; its full sequence is Endonuclease YncB (211 aa).

A signal peptide spans 1 to 19; the sequence is MKKILISMIAIVLSITLAA. Cys-20 is lipidated: N-palmitoyl cysteine. Cys-20 is lipidated: S-diacylglycerol cysteine. Residues 24–63 are disordered; that stretch reads HAAKNHSDSNGTEQVSQDTHSNEYNQTEQKAGTPHSKNQK. A compositionally biased stretch (polar residues) spans 31-53; it reads DSNGTEQVSQDTHSNEYNQTEQK. Residues 64-197 enclose the TNase-like domain; sequence KLVNVTLDRA…KSDKLSIWSK (134 aa). Asp-77 provides a ligand contact to Ca(2+). Arg-91 is an active-site residue. Asp-96 and Thr-97 together coordinate Ca(2+). Active-site residues include Glu-99 and Arg-142.

The protein belongs to the thermonuclease family. The cofactor is Ca(2+).

The protein resides in the cell membrane. Inhibited by aurintricalboxylic acid but not by Zn(2+). Functionally, shows DNase activity on double strand DNA. The polypeptide is Endonuclease YncB (yncB) (Bacillus subtilis (strain 168)).